The sequence spans 377 residues: MFNLLKPFYPLVLTAAKSNPEGAHLQLLNTLNTLERTHHTRGGNWLLSQLDQSFCVDDSRLKQTLWGLTFNNPVGLAAGCDKEGIAAGIWSHLGFGFAELGAVTLHPQPGNPRPRLFRLPHDKAVLNRLGANNQGAEIMAQTLAEIWQRSPRNIPIGINLCKSKITPLDEAAQDYVGSFSYLENQADYFVVNVSSPNTPGLRSLQEGEQLNSILQALQAANQHQKPLFVKISPDLEEEAILTIIELAQTHCLAGIIATNTTIKRDRLTTQILPETGNKIQEEAGGISGLPIRDRSTEIIGFIYQKTQGKLPIIGVGGIFTPDDAWNKIIAGASLLQLYTGWIYQGPWIIPDIVRGLGDKLKQLGLSHISQAVGINHK.

FMN-binding positions include 78 to 82 (AGCDK) and Ala102. Lys82 is a binding site for substrate. 127 to 130 (NRLG) is a substrate binding site. Residues Asn159 and Asn192 each contribute to the FMN site. Asn192 contributes to the substrate binding site. Catalysis depends on Ser195, which acts as the Nucleophile. Asn197 serves as a coordination point for substrate. Residues Lys230 and Thr258 each coordinate FMN. 259 to 260 (NT) provides a ligand contact to substrate. Residues Gly288, Gly317, and 338 to 339 (YT) each bind FMN.

The protein belongs to the dihydroorotate dehydrogenase family. Type 2 subfamily. As to quaternary structure, monomer. It depends on FMN as a cofactor.

It is found in the cell membrane. It carries out the reaction (S)-dihydroorotate + a quinone = orotate + a quinol. It participates in pyrimidine metabolism; UMP biosynthesis via de novo pathway; orotate from (S)-dihydroorotate (quinone route): step 1/1. In terms of biological role, catalyzes the conversion of dihydroorotate to orotate with quinone as electron acceptor. The chain is Dihydroorotate dehydrogenase (quinone) from Rippkaea orientalis (strain PCC 8801 / RF-1) (Cyanothece sp. (strain PCC 8801)).